An 808-amino-acid chain; its full sequence is DNA ligase (808 aa).

Residues 1–30 (MSISDDISPVPPAPVSEPNAGQDAGQDAAP) are disordered. Positions 18 to 30 (PNAGQDAGQDAAP) are enriched in low complexity. Residues 61–65 (DAEYD), 110–111 (SL), and aspartate 141 each bind NAD(+). Catalysis depends on lysine 143, which acts as the N6-AMP-lysine intermediate. Residues arginine 164, glutamate 202, lysine 334, and lysine 358 each coordinate NAD(+). Zn(2+) is bound by residues cysteine 453, cysteine 456, cysteine 471, and cysteine 476. Residues 644–733 (EGSGPLAGLR…GGDVPEDGDG (90 aa)) form the BRCT domain. A disordered region spans residues 720–808 (LEGRGGDVPE…PRKKDQHSLL (89 aa)). A compositionally biased stretch (acidic residues) spans 727 to 742 (VPEDGDGAPGNEDEAP). Over residues 746-773 (ADVPAAPEVLADAPAAISADASSGVAPG) the composition is skewed to low complexity. The segment covering 779–792 (DRADMTDRTVRTDS) has biased composition (basic and acidic residues).

This sequence belongs to the NAD-dependent DNA ligase family. LigA subfamily. Requires Mg(2+) as cofactor. It depends on Mn(2+) as a cofactor.

It catalyses the reaction NAD(+) + (deoxyribonucleotide)n-3'-hydroxyl + 5'-phospho-(deoxyribonucleotide)m = (deoxyribonucleotide)n+m + AMP + beta-nicotinamide D-nucleotide.. Its function is as follows. DNA ligase that catalyzes the formation of phosphodiester linkages between 5'-phosphoryl and 3'-hydroxyl groups in double-stranded DNA using NAD as a coenzyme and as the energy source for the reaction. It is essential for DNA replication and repair of damaged DNA. The sequence is that of DNA ligase from Nitratidesulfovibrio vulgaris (strain DSM 19637 / Miyazaki F) (Desulfovibrio vulgaris).